The primary structure comprises 164 residues: Protein eva-1 homolog B (164 aa).

The helical transmembrane segment at 29-49 (GLYFVLGVCFGLLLTLCLLVI) threads the bilayer. The disordered stretch occupies residues 56–110 (RSRPRTPAPRRDPRSSTLEPEDEDDEEDEDTMTRLGPDDTLQGQELSTEPDGPLS). The span at 74–85 (EPEDEDDEEDED) shows a compositional bias: acidic residues. Phosphothreonine is present on residues threonine 86, threonine 149, and threonine 157.

It belongs to the EVA1 family.

The protein localises to the membrane. The sequence is that of Protein eva-1 homolog B (Eva1b) from Mus musculus (Mouse).